The sequence spans 62 residues: MAENGKTVQVTQIASVIGRKPGQAETITGLGLRGIGSTRTLEDTPAVRGMIRKVAHLIKVEG.

It belongs to the universal ribosomal protein uL30 family. As to quaternary structure, part of the 50S ribosomal subunit.

The sequence is that of Large ribosomal subunit protein uL30 from Gluconobacter oxydans (strain 621H) (Gluconobacter suboxydans).